The chain runs to 373 residues: UDP-N-acetylglucosamine--N-acetylmuramyl-(pentapeptide) pyrophosphoryl-undecaprenol N-acetylglucosamine transferase (373 aa).

UDP-N-acetyl-alpha-D-glucosamine is bound by residues 15–17 (TGG), asparagine 126, arginine 170, serine 198, and glutamine 300.

Belongs to the glycosyltransferase 28 family. MurG subfamily.

It localises to the cell inner membrane. The catalysed reaction is di-trans,octa-cis-undecaprenyl diphospho-N-acetyl-alpha-D-muramoyl-L-alanyl-D-glutamyl-meso-2,6-diaminopimeloyl-D-alanyl-D-alanine + UDP-N-acetyl-alpha-D-glucosamine = di-trans,octa-cis-undecaprenyl diphospho-[N-acetyl-alpha-D-glucosaminyl-(1-&gt;4)]-N-acetyl-alpha-D-muramoyl-L-alanyl-D-glutamyl-meso-2,6-diaminopimeloyl-D-alanyl-D-alanine + UDP + H(+). The protein operates within cell wall biogenesis; peptidoglycan biosynthesis. Its function is as follows. Cell wall formation. Catalyzes the transfer of a GlcNAc subunit on undecaprenyl-pyrophosphoryl-MurNAc-pentapeptide (lipid intermediate I) to form undecaprenyl-pyrophosphoryl-MurNAc-(pentapeptide)GlcNAc (lipid intermediate II). This is UDP-N-acetylglucosamine--N-acetylmuramyl-(pentapeptide) pyrophosphoryl-undecaprenol N-acetylglucosamine transferase from Methylobacterium nodulans (strain LMG 21967 / CNCM I-2342 / ORS 2060).